Here is a 343-residue protein sequence, read N- to C-terminus: Holliday junction branch migration complex subunit RuvB (343 aa).

Residues 1–181 form a large ATPase domain (RuvB-L) region; it reads MDRIIDTAAT…FGIVQRLEFY (181 aa). Residues Ile20, Arg21, Gly62, Lys65, Thr66, Thr67, 128–130, Arg171, Tyr181, and Arg218 contribute to the ATP site; that span reads EDF. Thr66 contributes to the Mg(2+) binding site. The segment at 182–252 is small ATPAse domain (RuvB-S); sequence SPEDLARIVR…VAQAAMQMLK (71 aa). The head domain (RuvB-H) stretch occupies residues 255 to 343; the sequence is QGGFDELDRR…SAFTDPEDLF (89 aa). Positions 291, 310, and 315 each coordinate DNA.

This sequence belongs to the RuvB family. In terms of assembly, homohexamer. Forms an RuvA(8)-RuvB(12)-Holliday junction (HJ) complex. HJ DNA is sandwiched between 2 RuvA tetramers; dsDNA enters through RuvA and exits via RuvB. An RuvB hexamer assembles on each DNA strand where it exits the tetramer. Each RuvB hexamer is contacted by two RuvA subunits (via domain III) on 2 adjacent RuvB subunits; this complex drives branch migration. In the full resolvosome a probable DNA-RuvA(4)-RuvB(12)-RuvC(2) complex forms which resolves the HJ.

It is found in the cytoplasm. The enzyme catalyses ATP + H2O = ADP + phosphate + H(+). In terms of biological role, the RuvA-RuvB-RuvC complex processes Holliday junction (HJ) DNA during genetic recombination and DNA repair, while the RuvA-RuvB complex plays an important role in the rescue of blocked DNA replication forks via replication fork reversal (RFR). RuvA specifically binds to HJ cruciform DNA, conferring on it an open structure. The RuvB hexamer acts as an ATP-dependent pump, pulling dsDNA into and through the RuvAB complex. RuvB forms 2 homohexamers on either side of HJ DNA bound by 1 or 2 RuvA tetramers; 4 subunits per hexamer contact DNA at a time. Coordinated motions by a converter formed by DNA-disengaged RuvB subunits stimulates ATP hydrolysis and nucleotide exchange. Immobilization of the converter enables RuvB to convert the ATP-contained energy into a lever motion, pulling 2 nucleotides of DNA out of the RuvA tetramer per ATP hydrolyzed, thus driving DNA branch migration. The RuvB motors rotate together with the DNA substrate, which together with the progressing nucleotide cycle form the mechanistic basis for DNA recombination by continuous HJ branch migration. Branch migration allows RuvC to scan DNA until it finds its consensus sequence, where it cleaves and resolves cruciform DNA. The sequence is that of Holliday junction branch migration complex subunit RuvB from Xylella fastidiosa (strain 9a5c).